A 586-amino-acid chain; its full sequence is Madf and zinc finger protein 1 (586 aa).

The interval 161-194 (FMSEDDLAPPRKPGRPPRRTRPGQVFKFKVSFIR) is involved in interaction with Cp190. Residues 201–292 (HLIQAYKEHP…KCEFLSVAPV (92 aa)) constitute a DNA-binding region (MADF 1). An involved in interaction with Cp190 region spans residues 294-319 (TPRENEEDNDLTAIKLNFKEENLITT). Residues 320-413 (SFIETYANYP…MCSFLPAKGS (94 aa)) constitute a DNA-binding region (MADF 2). C2H2-type zinc fingers lie at residues 418–441 (LYCD…VKAH), 448–471 (YLCS…LRSH), 476–498 (LKCQ…TLIH), 504–527 (HVCD…NGVH), 533–555 (YSCN…IKGH), and 561–583 (KKCE…RRSH).

In terms of assembly, interacts (via regions flanking MADF domain 1) with Cp190 (via regions between the BTB domain and first zinc finger domain); the interaction is probably direct and is essential for protein function.

The protein localises to the nucleus. The protein resides in the chromosome. It is found in the nucleoplasm. In terms of biological role, chromatin-binding protein involved in the organization of active promoters and insulators. Essential for the activity of heterochromatin promoters; primarily binds to specific motifs within promoters of housekeeping genes. May also associate to a lesser extent with promoters in euchromatin. Mediates recruitment of Cp190, a multifunctional protein involved in the recruitment of transcription complexes, the creation of open chromatin regions and the activity of insulators. Cooperates with pita and su(Hw) to recruit Cp190 and regulate insulator function at the front-ultraabdominal (Fub) boundary. May cooperate with other C2H2 zinc finger proteins, such as M1BP, to recruit CP190 to promoters. May be involved in cellular organization and development of the eye. In Drosophila melanogaster (Fruit fly), this protein is Madf and zinc finger protein 1.